A 201-amino-acid polypeptide reads, in one-letter code: Putative ferritin heavy polypeptide-like 19 (201 aa).

The Ferritin-like diiron domain maps to 1 to 123; sequence MAFYFDQDDA…GYLSNLHKMG (123 aa).

This sequence belongs to the ferritin family.

The chain is Putative ferritin heavy polypeptide-like 19 (FTH1P19) from Homo sapiens (Human).